The sequence spans 232 residues: Phosphatidylserine decarboxylase proenzyme (232 aa).

Ser-190 (schiff-base intermediate with substrate; via pyruvic acid) is an active-site residue. Position 190 is a pyruvic acid (Ser); by autocatalysis (Ser-190).

Belongs to the phosphatidylserine decarboxylase family. PSD-A subfamily. Heterodimer of a large membrane-associated beta subunit and a small pyruvoyl-containing alpha subunit. Pyruvate is required as a cofactor. Post-translationally, is synthesized initially as an inactive proenzyme. Formation of the active enzyme involves a self-maturation process in which the active site pyruvoyl group is generated from an internal serine residue via an autocatalytic post-translational modification. Two non-identical subunits are generated from the proenzyme in this reaction, and the pyruvate is formed at the N-terminus of the alpha chain, which is derived from the carboxyl end of the proenzyme. The post-translation cleavage follows an unusual pathway, termed non-hydrolytic serinolysis, in which the side chain hydroxyl group of the serine supplies its oxygen atom to form the C-terminus of the beta chain, while the remainder of the serine residue undergoes an oxidative deamination to produce ammonia and the pyruvoyl prosthetic group on the alpha chain.

It is found in the cell membrane. The enzyme catalyses a 1,2-diacyl-sn-glycero-3-phospho-L-serine + H(+) = a 1,2-diacyl-sn-glycero-3-phosphoethanolamine + CO2. It participates in phospholipid metabolism; phosphatidylethanolamine biosynthesis; phosphatidylethanolamine from CDP-diacylglycerol: step 2/2. Functionally, catalyzes the formation of phosphatidylethanolamine (PtdEtn) from phosphatidylserine (PtdSer). The polypeptide is Phosphatidylserine decarboxylase proenzyme (Cereibacter sphaeroides (strain ATCC 17025 / ATH 2.4.3) (Rhodobacter sphaeroides)).